The primary structure comprises 1066 residues: Exportin-T (1066 aa).

Belongs to the exportin family.

The protein localises to the nucleus. Its subcellular location is the cytoplasm. In terms of biological role, tRNA nucleus export receptor which facilitates tRNA translocation across the nuclear pore complex. Involved in pre-tRNA splicing, probably by affecting the interaction of pre-tRNA with splicing endonuclease. In Laccaria bicolor (strain S238N-H82 / ATCC MYA-4686) (Bicoloured deceiver), this protein is Exportin-T (LOS1).